Here is a 67-residue protein sequence, read N- to C-terminus: ORF2p protein (67 aa).

The interval 13–18 (WIGHPV) is important for viral replication in intestinal cells. Over 22–38 (AIIYPFVGFIPLSLKEV) the chain traverses the membrane.

It localises to the host cytoplasmic vesicle membrane. Its function is as follows. Facilitates virus release from intestinal cells in vitro, possibly through the host autophagic pathway. This is ORF2p protein from Homo sapiens (Human).